Reading from the N-terminus, the 88-residue chain is YcgL domain-containing protein HI_1446 (88 aa).

The YcgL domain maps to 1-85 (MLCAIYKSKK…QDDGLFNSLS (85 aa)).

The sequence is that of YcgL domain-containing protein HI_1446 from Haemophilus influenzae (strain ATCC 51907 / DSM 11121 / KW20 / Rd).